A 391-amino-acid chain; its full sequence is Phosphoglycerate kinase (391 aa).

Residues 21–23 (DLN), Arg-36, 59–62 (HLGR), Arg-113, and Arg-146 contribute to the substrate site. ATP contacts are provided by residues Lys-197, Glu-319, and 345-348 (GGDT).

Belongs to the phosphoglycerate kinase family. As to quaternary structure, monomer.

The protein resides in the cytoplasm. The catalysed reaction is (2R)-3-phosphoglycerate + ATP = (2R)-3-phospho-glyceroyl phosphate + ADP. It functions in the pathway carbohydrate degradation; glycolysis; pyruvate from D-glyceraldehyde 3-phosphate: step 2/5. The polypeptide is Phosphoglycerate kinase (Xanthomonas campestris pv. campestris (strain 8004)).